The primary structure comprises 310 residues: S-methyl-5'-thioadenosine phosphorylase (310 aa).

Residues T20, 62-63 (RH), and 95-96 (SA) contribute to the phosphate site. Residue M197 participates in substrate binding. S198 is a phosphate binding site. Residue 221-223 (DYD) coordinates substrate.

The protein belongs to the PNP/MTAP phosphorylase family. MTAP subfamily. Homotrimer.

It localises to the cytoplasm. It is found in the nucleus. The catalysed reaction is S-methyl-5'-thioadenosine + phosphate = 5-(methylsulfanyl)-alpha-D-ribose 1-phosphate + adenine. It functions in the pathway amino-acid biosynthesis; L-methionine biosynthesis via salvage pathway; S-methyl-5-thio-alpha-D-ribose 1-phosphate from S-methyl-5'-thioadenosine (phosphorylase route): step 1/1. In terms of biological role, catalyzes the reversible phosphorylation of S-methyl-5'-thioadenosine (MTA) to adenine and 5-methylthioribose-1-phosphate. Involved in the breakdown of MTA, a major by-product of polyamine biosynthesis. Responsible for the first step in the methionine salvage pathway after MTA has been generated from S-adenosylmethionine. Has broad substrate specificity with 6-aminopurine nucleosides as preferred substrates. The chain is S-methyl-5'-thioadenosine phosphorylase from Neurospora crassa (strain ATCC 24698 / 74-OR23-1A / CBS 708.71 / DSM 1257 / FGSC 987).